The following is a 113-amino-acid chain: Class I hydrophobin POH1 (113 aa).

The signal sequence occupies residues Met1–Thr26. Intrachain disulfides connect Cys31–Cys93, Cys38–Cys87, Cys39–Cys74, and Cys94–Cys107.

The protein belongs to the fungal hydrophobin family. In terms of assembly, self-assembles to form functional amyloid fibrils called rodlets. Self-assembly into fibrillar rodlets occurs spontaneously at hydrophobic:hydrophilic interfaces and the rodlets further associate laterally to form amphipathic monolayers. In terms of tissue distribution, expressed in the fruiting bodies but not in vegetative mycelium.

The protein localises to the secreted. Its subcellular location is the cell wall. Aerial growth, conidiation, and dispersal of filamentous fungi in the environment rely upon a capability of their secreting small amphipathic proteins called hydrophobins (HPBs) with low sequence identity. Class I can self-assemble into an outermost layer of rodlet bundles on aerial cell surfaces, conferring cellular hydrophobicity that supports fungal growth, development and dispersal; whereas Class II form highly ordered films at water-air interfaces through intermolecular interactions but contribute nothing to the rodlet structure. POH1 is a class I hydrophobin that is involved in the formation of mycelium knots and subsequent fruiting bodies. The protein is Class I hydrophobin POH1 of Pleurotus ostreatus (Oyster mushroom).